The sequence spans 102 residues: Urease subunit beta (102 aa).

The protein belongs to the urease beta subunit family. As to quaternary structure, heterotrimer of UreA (gamma), UreB (beta) and UreC (alpha) subunits. Three heterotrimers associate to form the active enzyme.

The protein localises to the cytoplasm. The catalysed reaction is urea + 2 H2O + H(+) = hydrogencarbonate + 2 NH4(+). The protein operates within nitrogen metabolism; urea degradation; CO(2) and NH(3) from urea (urease route): step 1/1. This is Urease subunit beta from Blochmanniella pennsylvanica (strain BPEN).